A 422-amino-acid polypeptide reads, in one-letter code: Enolase (422 aa).

Q162 is a binding site for (2R)-2-phosphoglycerate. E204 serves as the catalytic Proton donor. 3 residues coordinate Mg(2+): D241, E285, and D312. Residues K337, R366, S367, and K388 each coordinate (2R)-2-phosphoglycerate. K337 functions as the Proton acceptor in the catalytic mechanism.

It belongs to the enolase family. It depends on Mg(2+) as a cofactor.

The protein localises to the cytoplasm. The protein resides in the secreted. Its subcellular location is the cell surface. The enzyme catalyses (2R)-2-phosphoglycerate = phosphoenolpyruvate + H2O. Its pathway is carbohydrate degradation; glycolysis; pyruvate from D-glyceraldehyde 3-phosphate: step 4/5. Its function is as follows. Catalyzes the reversible conversion of 2-phosphoglycerate (2-PG) into phosphoenolpyruvate (PEP). It is essential for the degradation of carbohydrates via glycolysis. The polypeptide is Enolase (Streptococcus thermophilus).